Consider the following 408-residue polypeptide: Histidine--tRNA ligase (408 aa).

It belongs to the class-II aminoacyl-tRNA synthetase family. In terms of assembly, homodimer.

Its subcellular location is the cytoplasm. It catalyses the reaction tRNA(His) + L-histidine + ATP = L-histidyl-tRNA(His) + AMP + diphosphate + H(+). The chain is Histidine--tRNA ligase from Wolbachia pipientis wMel.